We begin with the raw amino-acid sequence, 740 residues long: Alpha-1,6-mannosylglycoprotein 6-beta-N-acetylglucosaminyltransferase A (740 aa).

Topologically, residues 1–13 (MAFFSPWKLSSQK) are cytoplasmic. A helical; Signal-anchor for type II membrane protein transmembrane segment spans residues 14 to 30 (LGFFLVTFGFIWGMMLL). The Lumenal segment spans residues 31 to 740 (HFTIQQRTQP…GQVALCKDCL (710 aa)). 3 N-linked (GlcNAc...) asparagine glycosylation sites follow: asparagine 109, asparagine 114, and asparagine 117. 9 disulfides stabilise this stretch: cysteine 144–cysteine 182, cysteine 155–cysteine 195, cysteine 171–cysteine 337, cysteine 371–cysteine 625, cysteine 648–cysteine 723, cysteine 652–cysteine 725, cysteine 659–cysteine 712, cysteine 680–cysteine 701, and cysteine 736–cysteine 739. The sufficient for catalytic activity stretch occupies residues 212–740 (NSLAEIRTDF…GQVALCKDCL (529 aa)). An N-linked (GlcNAc...) asparagine glycan is attached at asparagine 333. 377-378 (DS) is a binding site for substrate. N-linked (GlcNAc...) asparagine glycans are attached at residues asparagine 432 and asparagine 446. Glutamate 525 is a binding site for UDP-N-acetyl-alpha-D-glucosamine. Residue lysine 553 participates in substrate binding.

Belongs to the glycosyltransferase 18 family. N-glycosylated. Post-translationally, a secreted form is released from the membrane after cleavage by gamma-secretase. In terms of tissue distribution, detected in kidney (at protein level). Detected in kidney.

The protein localises to the golgi apparatus membrane. The protein resides in the secreted. The catalysed reaction is N(4)-{beta-D-GlcNAc-(1-&gt;2)-[beta-D-GlcNAc-(1-&gt;4)]-alpha-D-Man-(1-&gt;3)-[beta-D-GlcNAc-(1-&gt;2)-alpha-D-Man-(1-&gt;6)]-beta-D-Man-(1-&gt;4)-beta-D-GlcNAc-(1-&gt;4)-beta-D-GlcNAc}-L-asparaginyl-[protein] + UDP-N-acetyl-alpha-D-glucosamine = N(4)-{beta-D-GlcNAc-(1-&gt;2)-[beta-D-GlcNAc-(1-&gt;4)]-alpha-D-Man-(1-&gt;3)-[beta-D-GlcNAc-(1-&gt;2)-[beta-D-GlcNAc-(1-&gt;6)]-alpha-D-Man-(1-&gt;6)]-beta-D-Man-(1-&gt;4)-beta-D-GlcNAc-(1-&gt;4)-beta-D-GlcNAc}-L-asparaginyl-[protein] + UDP + H(+). It participates in protein modification; protein glycosylation. Functionally, catalyzes the addition of N-acetylglucosamine (GlcNAc) in beta 1-6 linkage to the alpha-linked mannose of biantennary N-linked oligosaccharides. Catalyzes an important step in the biosynthesis of branched, complex-type N-glycans, such as those found on EGFR, TGFR (TGF-beta receptor) and CDH2. Via its role in the biosynthesis of complex N-glycans, plays an important role in the activation of cellular signaling pathways, reorganization of the actin cytoskeleton, cell-cell adhesion and cell migration. MGAT5-dependent EGFR N-glycosylation enhances the interaction between EGFR and LGALS3 and thereby prevents rapid EGFR endocytosis and prolongs EGFR signaling. Required for efficient interaction between TGFB1 and its receptor. Enhances activation of intracellular signaling pathways by several types of growth factors, including FGF2, PDGF, IGF, TGFB1 and EGF. MGAT5-dependent CDH2 N-glycosylation inhibits CDH2-mediated homotypic cell-cell adhesion and contributes to the regulation of downstream signaling pathways. Promotes cell migration. Contributes to the regulation of the inflammatory response. MGAT5-dependent TCR N-glycosylation enhances the interaction between TCR and LGALS3, limits agonist-induced TCR clustering, and thereby dampens TCR-mediated responses to antigens. Required for normal leukocyte evasation and accumulation at sites of inflammation. Inhibits attachment of monocytes to the vascular endothelium and subsequent monocyte diapedesis. Promotes proliferation of umbilical vein endothelial cells and angiogenesis, at least in part by promoting the release of the growth factor FGF2 from the extracellular matrix. The polypeptide is Alpha-1,6-mannosylglycoprotein 6-beta-N-acetylglucosaminyltransferase A (Mgat5) (Rattus norvegicus (Rat)).